Reading from the N-terminus, the 422-residue chain is Tyrosine--tRNA ligase (422 aa).

Tyrosine 36 serves as a coordination point for L-tyrosine. Positions 41–50 match the 'HIGH' region motif; that stretch reads PTADSLHIGH. L-tyrosine-binding residues include tyrosine 175 and glutamine 179. The short motif at 235–239 is the 'KMSKS' region element; that stretch reads KFGKT. Lysine 238 serves as a coordination point for ATP. One can recognise an S4 RNA-binding domain in the interval 354–411; it reads TSLQEALTKSKLATSRSQARYFIKSNAITINAHKQSKIEYIFQDSDRIYNLYTLLKRG.

Belongs to the class-I aminoacyl-tRNA synthetase family. TyrS type 1 subfamily. In terms of assembly, homodimer.

It localises to the cytoplasm. The enzyme catalyses tRNA(Tyr) + L-tyrosine + ATP = L-tyrosyl-tRNA(Tyr) + AMP + diphosphate + H(+). Functionally, catalyzes the attachment of tyrosine to tRNA(Tyr) in a two-step reaction: tyrosine is first activated by ATP to form Tyr-AMP and then transferred to the acceptor end of tRNA(Tyr). This chain is Tyrosine--tRNA ligase, found in Blochmanniella floridana.